Consider the following 60-residue polypeptide: Large ribosomal subunit protein uL30 (60 aa).

Belongs to the universal ribosomal protein uL30 family. In terms of assembly, part of the 50S ribosomal subunit.

This Verminephrobacter eiseniae (strain EF01-2) protein is Large ribosomal subunit protein uL30.